The primary structure comprises 274 residues: Undecaprenyl-diphosphatase (274 aa).

7 helical membrane passes run 40-60 (PGAA…LMFF), 90-110 (WFII…KDVI), 114-134 (FRSL…LGVA), 147-167 (ISLR…IPGV), 190-210 (YAFL…LKDI), 221-241 (PTIV…AWLL), and 252-272 (FVLY…TGVI).

It belongs to the UppP family.

The protein resides in the cell membrane. The catalysed reaction is di-trans,octa-cis-undecaprenyl diphosphate + H2O = di-trans,octa-cis-undecaprenyl phosphate + phosphate + H(+). Catalyzes the dephosphorylation of undecaprenyl diphosphate (UPP). Confers resistance to bacitracin. This is Undecaprenyl-diphosphatase from Nocardioides sp. (strain ATCC BAA-499 / JS614).